Consider the following 152-residue polypeptide: uncharacterized protein (152 aa).

It is found in the mitochondrion. This is an uncharacterized protein from Arabidopsis thaliana (Mouse-ear cress).